Consider the following 217-residue polypeptide: 3,4-dihydroxy-2-butanone 4-phosphate synthase (217 aa).

D-ribulose 5-phosphate contacts are provided by residues 37-38, Asp-42, 150-154, and Glu-174; these read RE and RQGHT. Residue Glu-38 coordinates Mg(2+). Position 153 (His-153) interacts with Mg(2+).

Belongs to the DHBP synthase family. In terms of assembly, homodimer. Mg(2+) serves as cofactor. Requires Mn(2+) as cofactor.

The catalysed reaction is D-ribulose 5-phosphate = (2S)-2-hydroxy-3-oxobutyl phosphate + formate + H(+). It functions in the pathway cofactor biosynthesis; riboflavin biosynthesis; 2-hydroxy-3-oxobutyl phosphate from D-ribulose 5-phosphate: step 1/1. Functionally, catalyzes the conversion of D-ribulose 5-phosphate to formate and 3,4-dihydroxy-2-butanone 4-phosphate. The protein is 3,4-dihydroxy-2-butanone 4-phosphate synthase of Desulforamulus reducens (strain ATCC BAA-1160 / DSM 100696 / MI-1) (Desulfotomaculum reducens).